A 598-amino-acid chain; its full sequence is uncharacterized protein (598 aa).

Low complexity predominate over residues 1–19; the sequence is MSVPLRFSTPSSSPSASDN. Disordered regions lie at residues 1 to 54, 139 to 176, and 194 to 279; these read MSVP…MRPK, QKNQ…PNWK, and EAQL…ITMP. The Cytoplasmic portion of the chain corresponds to 1 to 313; the sequence is MSVPLRFSTP…CKIRHFFREG (313 aa). Over residues 30-48 the composition is skewed to polar residues; it reads ELDTFNTTDVPRRVNTTKA. Over residues 147–165 the composition is skewed to low complexity; it reads RANSRVNSRANSRANSSVS. Composition is skewed to polar residues over residues 218–242 and 255–276; these read FSLQ…SSAI and PRNN…SQDI. The chain crosses the membrane as a helical span at residues 314–334; sequence FAEFLGTLVLVVFGVGSNLQA. Residues 335-346 are Extracellular-facing; it reads TVTNGAGGSFES. A helical membrane pass occupies residues 347 to 367; that stretch reads LSFAWGFGCMLGVYIAGGISG. The Cytoplasmic segment spans residues 368–388; it reads GHVNPAVTISLAIFRKFPWYK. Residues 371-373 carry the NPA 1 motif; the sequence is NPA. The helical transmembrane segment at 389-409 threads the bilayer; sequence VPIYIFFQIWGAFFGGALAYG. The Extracellular portion of the chain corresponds to 410 to 444; that stretch reads YHWSSITEFEGGKDIRTPATGGCLYTNPKPYVTWR. The chain crosses the membrane as a helical span at residues 445-465; it reads NAFFDEFIGTAVLVGCLFAIL. The Cytoplasmic portion of the chain corresponds to 466-473; sequence DDTNSPPT. Residues 474–494 form a helical membrane-spanning segment; the sequence is QGMTAFIVGLLIAAIGMALGY. The Extracellular portion of the chain corresponds to 495–532; it reads QTSFTLNPARDLGPRMFAWWIGYGPHSFHLYHWWWTWG. Positions 501-503 match the NPA 2 motif; it reads NPA. A helical membrane pass occupies residues 533-553; that stretch reads AWGGTIGGGIAGGLIYDLVIF. Topologically, residues 554 to 598 are cytoplasmic; the sequence is TGPESPLNYPDNGFIDKKVHQITAKFEKEEEVENLEKTDSPIENN.

It belongs to the MIP/aquaporin (TC 1.A.8) family.

The protein resides in the membrane. This is an uncharacterized protein from Schizosaccharomyces pombe (strain 972 / ATCC 24843) (Fission yeast).